We begin with the raw amino-acid sequence, 514 residues long: Putative thymidine phosphorylase (514 aa).

It belongs to the thymidine/pyrimidine-nucleoside phosphorylase family. Type 2 subfamily.

The enzyme catalyses thymidine + phosphate = 2-deoxy-alpha-D-ribose 1-phosphate + thymine. The polypeptide is Putative thymidine phosphorylase (Sphingopyxis alaskensis (strain DSM 13593 / LMG 18877 / RB2256) (Sphingomonas alaskensis)).